Reading from the N-terminus, the 511-residue chain is Maturase K (511 aa).

It belongs to the intron maturase 2 family. MatK subfamily.

The protein localises to the plastid. Its subcellular location is the chloroplast. Its function is as follows. Usually encoded in the trnK tRNA gene intron. Probably assists in splicing its own and other chloroplast group II introns. In Bromus inermis (Smooth brome grass), this protein is Maturase K.